The primary structure comprises 132 residues: Small ribosomal subunit protein uS9 (132 aa).

Belongs to the universal ribosomal protein uS9 family.

The sequence is that of Small ribosomal subunit protein uS9 from Leptospira borgpetersenii serovar Hardjo-bovis (strain JB197).